Consider the following 360-residue polypeptide: Small ribosomal subunit protein mS22 (360 aa).

Ser54 bears the Phosphoserine mark. At Lys211 the chain carries N6-acetyllysine.

It belongs to the mitochondrion-specific ribosomal protein mS22 family. In terms of assembly, component of the mitochondrial small ribosomal subunit (mt-SSU). Mature mammalian 55S mitochondrial ribosomes consist of a small (28S) and a large (39S) subunit. The 28S small subunit contains a 12S ribosomal RNA (12S mt-rRNA) and 30 different proteins. The 39S large subunit contains a 16S rRNA (16S mt-rRNA), a copy of mitochondrial valine transfer RNA (mt-tRNA(Val)), which plays an integral structural role, and 52 different proteins.

Its subcellular location is the mitochondrion. The chain is Small ribosomal subunit protein mS22 (MRPS22) from Homo sapiens (Human).